Consider the following 67-residue polypeptide: Alpha-conotoxin-like Qc1.1b (67 aa).

An N-terminal signal peptide occupies residues 1–21; sequence MGMRMMFTMFLLVVLAITVVS. The propeptide occupies 22 to 46; it reads FTSDHASDGRNTAANDKASKLMALR. Intrachain disulfides connect cysteine 49-cysteine 55 and cysteine 50-cysteine 63. The tract at residues 51–53 is lacks the Ser-Xaa-Pro motif that is crucial for potent interaction with nAChR; it reads DNP.

This sequence belongs to the conotoxin A superfamily. Expressed by the venom duct.

It localises to the secreted. Alpha-conotoxins act on postsynaptic membranes, they bind to the nicotinic acetylcholine receptors (nAChR) and thus inhibit them. Has possibly a distinct nAChR binding mode from other alpha-conotoxins, due to a different three residue motif (lacks the Ser-Xaa-Pro motif). This chain is Alpha-conotoxin-like Qc1.1b, found in Conus quercinus (Oak cone).